Consider the following 143-residue polypeptide: Large ribosomal subunit protein uL11 (143 aa).

The protein belongs to the universal ribosomal protein uL11 family. As to quaternary structure, part of the ribosomal stalk of the 50S ribosomal subunit. Interacts with L10 and the large rRNA to form the base of the stalk. L10 forms an elongated spine to which L12 dimers bind in a sequential fashion forming a multimeric L10(L12)X complex. One or more lysine residues are methylated.

Forms part of the ribosomal stalk which helps the ribosome interact with GTP-bound translation factors. This Ralstonia nicotianae (strain ATCC BAA-1114 / GMI1000) (Ralstonia solanacearum) protein is Large ribosomal subunit protein uL11.